A 349-amino-acid polypeptide reads, in one-letter code: Galactose-1-phosphate uridylyltransferase (349 aa).

29–32 (RAKR) lines the UDP-alpha-D-glucose pocket. Residues Cys53 and Cys56 each coordinate Zn(2+). 78–79 (ND) serves as a coordination point for UDP-alpha-D-glucose. His116 is a Zn(2+) binding site. Residues Asn154 and 160 to 162 (GCS) contribute to the UDP-alpha-D-glucose site. Position 165 (His165) interacts with Zn(2+). The active-site Tele-UMP-histidine intermediate is the His167. Gln169 contacts UDP-alpha-D-glucose. 4 residues coordinate Fe cation: Glu183, His282, His297, and His299. UDP-alpha-D-glucose contacts are provided by residues 312–313 (KF), 317–318 (YE), and Gln324.

This sequence belongs to the galactose-1-phosphate uridylyltransferase type 1 family. Zn(2+) serves as cofactor.

It catalyses the reaction alpha-D-galactose 1-phosphate + UDP-alpha-D-glucose = alpha-D-glucose 1-phosphate + UDP-alpha-D-galactose. It functions in the pathway carbohydrate metabolism; galactose metabolism. The polypeptide is Galactose-1-phosphate uridylyltransferase (galT) (Haemophilus influenzae (strain ATCC 51907 / DSM 11121 / KW20 / Rd)).